The chain runs to 510 residues: GMP synthase [glutamine-hydrolyzing] (510 aa).

Residues L5–D195 enclose the Glutamine amidotransferase type-1 domain. C82 acts as the Nucleophile in catalysis. Residues H169 and E171 contribute to the active site. A GMPS ATP-PPase domain is found at W196–R385. Residue S223 to S229 coordinates ATP.

As to quaternary structure, homodimer.

The catalysed reaction is XMP + L-glutamine + ATP + H2O = GMP + L-glutamate + AMP + diphosphate + 2 H(+). Its pathway is purine metabolism; GMP biosynthesis; GMP from XMP (L-Gln route): step 1/1. In terms of biological role, catalyzes the synthesis of GMP from XMP. This is GMP synthase [glutamine-hydrolyzing] from Clostridium tetani (strain Massachusetts / E88).